The chain runs to 311 residues: MSVVNNRVALKHLVSMEHLTNEEVMGLISRGSEYKAGKVAIKDNSRHFAANLFFENSTRTHKSFEVAENKLGLRVLDFNADTSAVNKGETLYDTVLTMSALGTEICVIRHPEDDYYQQLIDSPTITASIVNGGDGSGQHPSQCLLDLLTIYEEFGHFDGLKIAIAGDLTHSRVAKSNMQILKRLGAELYFYGPEQWYSSEFDSYGRYMAIDHIIDQLDVLMLLRVQHERHDGSQSFSKEDYHRQFGLTEERYRRLKDSAIIMHPAPVNRDVEIADHLVEAPKARIVAQMANGVFVRMAIIEAILNGRNENV.

Positions 59 and 60 each coordinate carbamoyl phosphate. L-aspartate is bound at residue K87. Positions 109, 139, and 142 each coordinate carbamoyl phosphate. 2 residues coordinate L-aspartate: R172 and R224. A265 and P266 together coordinate carbamoyl phosphate.

This sequence belongs to the aspartate/ornithine carbamoyltransferase superfamily. ATCase family. Heterododecamer (2C3:3R2) of six catalytic PyrB chains organized as two trimers (C3), and six regulatory PyrI chains organized as three dimers (R2).

It carries out the reaction carbamoyl phosphate + L-aspartate = N-carbamoyl-L-aspartate + phosphate + H(+). It functions in the pathway pyrimidine metabolism; UMP biosynthesis via de novo pathway; (S)-dihydroorotate from bicarbonate: step 2/3. Catalyzes the condensation of carbamoyl phosphate and aspartate to form carbamoyl aspartate and inorganic phosphate, the committed step in the de novo pyrimidine nucleotide biosynthesis pathway. This Streptococcus equi subsp. zooepidemicus (strain MGCS10565) protein is Aspartate carbamoyltransferase catalytic subunit.